Here is a 95-residue protein sequence, read N- to C-terminus: Acyl carrier protein (95 aa).

The Carrier domain maps to 4 to 79 (KEIFERIEQV…HVMELTLDLV (76 aa)). Position 39 is an O-(pantetheine 4'-phosphoryl)serine (Ser-39).

It belongs to the acyl carrier protein (ACP) family. 4'-phosphopantetheine is transferred from CoA to a specific serine of apo-ACP by AcpS. This modification is essential for activity because fatty acids are bound in thioester linkage to the sulfhydryl of the prosthetic group.

It is found in the cytoplasm. It functions in the pathway lipid metabolism; fatty acid biosynthesis. Carrier of the growing fatty acid chain in fatty acid biosynthesis. In Saccharopolyspora erythraea (strain ATCC 11635 / DSM 40517 / JCM 4748 / NBRC 13426 / NCIMB 8594 / NRRL 2338), this protein is Acyl carrier protein.